A 438-amino-acid chain; its full sequence is Neutral metalloprotease ShpI (438 aa).

The first 26 residues, 1–26, serve as a signal peptide directing secretion; it reads MINKKKLVTSLVTSSLLATFTLGSFA. A propeptide spanning residues 27–101 is cleaved from the precursor; it reads DAHTYIINNE…KSENALSNSK (75 aa). Residue His242 participates in Zn(2+) binding. Glu243 is a catalytic residue. Zn(2+) is bound by residues His246 and Glu269.

It belongs to the peptidase M30 family. Zn(2+) is required as a cofactor. Several different N-terminal ends may be produced, the favored N-terminus is position 102.

It is found in the secreted. With respect to regulation, inhibited by metal- and zinc-specific inhibitors, such as EDTA and 1,10-phenanthroline in vitro. Is resistant to all inhibitors of serine, cysteine and aspartic proteases. In terms of biological role, protease that has a low substrate specificity. Catalyzes the hydrolysis of glucagon, melittin and oxidized beta-insulin at various positions in vitro. Is not able to cleave elastin or the synthetic substrates FAGLA (a substrate for neutral proteinases) and FALGPA (a substrate for collagenase). This is Neutral metalloprotease ShpI from Staphylococcus hyicus.